Here is a 136-residue protein sequence, read N- to C-terminus: Histone H3-7 (136 aa).

The interval 1–43 (MARTKQTARKSTGGKAPRKQLATKAARKSAPATGGVKKPHRYR) is disordered. R3 is modified (asymmetric dimethylarginine). R3 is modified (citrulline; alternate). T4 carries the post-translational modification Phosphothreonine. At K5 the chain carries Allysine; alternate. The residue at position 5 (K5) is an N6,N6,N6-trimethyllysine; alternate. Residue K5 is modified to N6,N6-dimethyllysine; alternate. An N6-(2-hydroxyisobutyryl)lysine; alternate modification is found at K5. K5 is modified (N6-(beta-hydroxybutyryl)lysine; alternate). N6-acetyllysine; alternate is present on K5. K5 carries the N6-methyllysine; alternate modification. Q6 is modified (5-glutamyl dopamine; alternate). At Q6 the chain carries 5-glutamyl serotonin; alternate. T7 bears the Phosphothreonine mark. Position 9 is a citrulline; alternate (R9). R9 carries the post-translational modification Symmetric dimethylarginine. K10 bears the N6,N6,N6-trimethyllysine; alternate mark. K10 carries the N6,N6-dimethyllysine; alternate modification. K10 carries the post-translational modification N6-(2-hydroxyisobutyryl)lysine; alternate. K10 carries the N6-(beta-hydroxybutyryl)lysine; alternate modification. K10 carries the post-translational modification N6-acetyllysine; alternate. K10 carries the N6-methyllysine; alternate modification. At K10 the chain carries N6-lactoyllysine; alternate. At S11 the chain carries ADP-ribosylserine; alternate. S11 is subject to Phosphoserine; alternate. T12 is subject to Phosphothreonine. At K15 the chain carries N6-(2-hydroxyisobutyryl)lysine; alternate. K15 bears the N6-(beta-hydroxybutyryl)lysine; alternate mark. At K15 the chain carries N6-acetyllysine; alternate. Residue K15 is modified to N6-lactoyllysine; alternate. K15 carries the N6-glutaryllysine; alternate modification. K15 is modified (N6-succinyllysine; alternate). The residue at position 18 (R18) is an Asymmetric dimethylarginine. R18 is subject to Citrulline; alternate. N6-(2-hydroxyisobutyryl)lysine; alternate occurs at positions 19 and 24. 2 positions are modified to N6-(beta-hydroxybutyryl)lysine; alternate: K19 and K24. K19 and K24 each carry N6-acetyllysine; alternate. An N6-methyllysine; alternate mark is found at K19 and K24. N6-lactoyllysine; alternate is present on residues K19 and K24. An N6-glutaryllysine; alternate mark is found at K19 and K24. Residues K19 and K24 each carry the N6-butyryllysine; alternate modification. R27 is subject to Citrulline. At K28 the chain carries N6,N6,N6-trimethyllysine; alternate. N6,N6-dimethyllysine; alternate is present on K28. K28 bears the N6-(2-hydroxyisobutyryl)lysine; alternate mark. An N6-acetyllysine; alternate modification is found at K28. K28 carries the N6-methyllysine; alternate modification. Residue K28 is modified to N6-lactoyllysine; alternate. K28 is modified (N6-glutaryllysine; alternate). An ADP-ribosylserine; alternate modification is found at S29. S29 is subject to Phosphoserine; alternate. K37 bears the N6,N6,N6-trimethyllysine; alternate mark. N6,N6-dimethyllysine; alternate is present on K37. K37 is subject to N6-(2-hydroxyisobutyryl)lysine; alternate. The residue at position 37 (K37) is an N6-acetyllysine; alternate. An N6-methyllysine; alternate modification is found at K37. Position 38 is an N6-methyllysine (K38). Y42 bears the Phosphotyrosine mark. K57 bears the N6,N6,N6-trimethyllysine; alternate mark. The residue at position 57 (K57) is an N6-(2-hydroxyisobutyryl)lysine; alternate. K57 carries the post-translational modification N6-(beta-hydroxybutyryl)lysine; alternate. An N6-acetyllysine; alternate modification is found at K57. Position 57 is an N6-lactoyllysine; alternate (K57). K57 is subject to N6-glutaryllysine; alternate. At K57 the chain carries N6-succinyllysine; alternate. K57 bears the N6-methyllysine mark. Residue S58 is modified to Phosphoserine. N6-(2-hydroxyisobutyryl)lysine; alternate is present on residues K65 and K80. N6-methyllysine; alternate occurs at positions 65 and 80. K80 carries the post-translational modification N6,N6,N6-trimethyllysine; alternate. Residue K80 is modified to N6,N6-dimethyllysine; alternate. The residue at position 80 (K80) is an N6-acetyllysine; alternate. At K80 the chain carries N6-lactoyllysine; alternate. K80 bears the N6-glutaryllysine; alternate mark. An N6-succinyllysine; alternate modification is found at K80. Position 81 is a phosphothreonine (T81). S87 is modified (phosphoserine). T108 bears the Phosphothreonine mark. An N6-acetyllysine; alternate mark is found at K116 and K123. N6-glutaryllysine; alternate occurs at positions 116 and 123. At K123 the chain carries N6-(2-hydroxyisobutyryl)lysine; alternate. N6-methyllysine; alternate is present on K123. Residue K123 is modified to N6-succinyllysine; alternate.

The protein belongs to the histone H3 family. In terms of assembly, the nucleosome is a histone octamer containing two molecules each of H2A, H2B, H3 and H4 assembled in one H3-H4 heterotetramer and two H2A-H2B heterodimers. The octamer wraps approximately 147 bp of DNA. During nucleosome assembly the chaperone ASF1A interacts with the histone H3-H4 heterodimer. Post-translationally, acetylation is generally linked to gene activation. Acetylation on Lys-10 (H3K9ac) impairs methylation at Arg-9 (H3R8me2s). Acetylation on Lys-19 (H3K18ac) and Lys-24 (H3K24ac) favors methylation at Arg-18 (H3R17me). Acetylation at Lys-123 (H3K122ac) by EP300/p300 plays a central role in chromatin structure: localizes at the surface of the histone octamer and stimulates transcription, possibly by promoting nucleosome instability. Citrullination at Arg-9 (H3R8ci) and/or Arg-18 (H3R17ci) by PADI4 impairs methylation and represses transcription. In terms of processing, asymmetric dimethylation at Arg-18 (H3R17me2a) by CARM1 is linked to gene activation. Symmetric dimethylation at Arg-9 (H3R8me2s) by PRMT5 is linked to gene repression. Asymmetric dimethylation at Arg-3 (H3R2me2a) by PRMT6 is linked to gene repression and is mutually exclusive with H3 Lys-5 methylation (H3K4me2 and H3K4me3). H3R2me2a is present at the 3' of genes regardless of their transcription state and is enriched on inactive promoters, while it is absent on active promoters. Post-translationally, methylation at Lys-5 (H3K4me), Lys-37 (H3K36me) and Lys-80 (H3K79me) are linked to gene activation. Methylation at Lys-5 (H3K4me) facilitates subsequent acetylation of H3 and H4. Methylation at Lys-80 (H3K79me) is associated with DNA double-strand break (DSB) responses and is a specific target for TP53BP1. Methylation at Lys-10 (H3K9me) and Lys-28 (H3K27me) are linked to gene repression. Methylation at Lys-10 (H3K9me) is a specific target for HP1 proteins (CBX1, CBX3 and CBX5) and prevents subsequent phosphorylation at Ser-11 (H3S10ph) and acetylation of H3 and H4. Methylation at Lys-5 (H3K4me) and Lys-80 (H3K79me) require preliminary monoubiquitination of H2B at 'Lys-120'. Methylation at Lys-10 (H3K9me) and Lys-28 (H3K27me) are enriched in inactive X chromosome chromatin. Monomethylation at Lys-57 (H3K56me1) by EHMT2/G9A in G1 phase promotes interaction with PCNA and is required for DNA replication. Phosphorylated at Thr-4 (H3T3ph) by HASPIN during prophase and dephosphorylated during anaphase. Phosphorylation at Ser-11 (H3S10ph) by AURKB is crucial for chromosome condensation and cell-cycle progression during mitosis and meiosis. In addition phosphorylation at Ser-11 (H3S10ph) by RPS6KA4 and RPS6KA5 is important during interphase because it enables the transcription of genes following external stimulation, like mitogens, stress, growth factors or UV irradiation and result in the activation of genes, such as c-fos and c-jun. Phosphorylation at Ser-11 (H3S10ph), which is linked to gene activation, prevents methylation at Lys-10 (H3K9me) but facilitates acetylation of H3 and H4. Phosphorylation at Ser-11 (H3S10ph) by AURKB mediates the dissociation of HP1 proteins (CBX1, CBX3 and CBX5) from heterochromatin. Phosphorylation at Ser-11 (H3S10ph) is also an essential regulatory mechanism for neoplastic cell transformation. Phosphorylated at Ser-29 (H3S28ph) by MAP3K20 isoform 1, RPS6KA5 or AURKB during mitosis or upon ultraviolet B irradiation. Phosphorylation at Thr-7 (H3T6ph) by PRKCB is a specific tag for epigenetic transcriptional activation that prevents demethylation of Lys-5 (H3K4me) by LSD1/KDM1A. At centromeres, specifically phosphorylated at Thr-12 (H3T11ph) from prophase to early anaphase, by DAPK3 and PKN1. Phosphorylation at Thr-12 (H3T11ph) by PKN1 or isoform M2 of PKM (PKM2) is a specific tag for epigenetic transcriptional activation that promotes demethylation of Lys-10 (H3K9me) by KDM4C/JMJD2C. Phosphorylation at Tyr-42 (H3Y41ph) by JAK2 promotes exclusion of CBX5 (HP1 alpha) from chromatin. In terms of processing, ubiquitinated. Post-translationally, lysine deamination at Lys-5 (H3K4all) to form allysine is mediated by LOXL2. Allysine formation by LOXL2 only takes place on H3K4me3 and results in gene repression. Butyrylation of histones marks active promoters and competes with histone acetylation. It is present during late spermatogenesis. In terms of processing, succinylation at Lys-80 (H3K79succ) by KAT2A takes place with a maximum frequency around the transcription start sites of genes. It gives a specific tag for epigenetic transcription activation. Desuccinylation at Lys-123 (H3K122succ) by SIRT7 in response to DNA damage promotes chromatin condensation and double-strand breaks (DSBs) repair. Post-translationally, serine ADP-ribosylation constitutes the primary form of ADP-ribosylation of proteins in response to DNA damage. Serine ADP-ribosylation at Ser-11 (H3S10ADPr) is mutually exclusive with phosphorylation at Ser-11 (H3S10ph) and impairs acetylation at Lys-10 (H3K9ac).

It is found in the nucleus. The protein resides in the chromosome. Core component of nucleosome. Nucleosomes wrap and compact DNA into chromatin, limiting DNA accessibility to the cellular machineries which require DNA as a template. Histones thereby play a central role in transcription regulation, DNA repair, DNA replication and chromosomal stability. DNA accessibility is regulated via a complex set of post-translational modifications of histones, also called histone code, and nucleosome remodeling. This is Histone H3-7 from Homo sapiens (Human).